Consider the following 98-residue polypeptide: uncharacterized protein (98 aa).

It belongs to the HHV-5 UL19 protein family.

This is an uncharacterized protein from Human cytomegalovirus (strain AD169) (HHV-5).